Reading from the N-terminus, the 207-residue chain is Ribonuclease HII (207 aa).

The RNase H type-2 domain maps to 10–199 (RLIAGVDEVG…VRNALLDAEL (190 aa)). Residues Asp16, Glu17, and Asp108 each contribute to the a divalent metal cation site.

Belongs to the RNase HII family. Mn(2+) is required as a cofactor. Mg(2+) serves as cofactor.

It is found in the cytoplasm. The enzyme catalyses Endonucleolytic cleavage to 5'-phosphomonoester.. In terms of biological role, endonuclease that specifically degrades the RNA of RNA-DNA hybrids. The protein is Ribonuclease HII of Erwinia tasmaniensis (strain DSM 17950 / CFBP 7177 / CIP 109463 / NCPPB 4357 / Et1/99).